We begin with the raw amino-acid sequence, 2272 residues long: Voltage-dependent R-type calcium channel subunit alpha-1E (2272 aa).

Residues M1–Y40 form a disordered region. Residues M1 to P90 lie on the Cytoplasmic side of the membrane. Phosphoserine occurs at positions 15 and 20. An I repeat occupies N77–F355. The helical transmembrane segment at P91 to L109 threads the bilayer. The Extracellular portion of the chain corresponds to E110–T128. The helical transmembrane segment at E129–L147 threads the bilayer. Topologically, residues G148 to N159 are cytoplasmic. A helical transmembrane segment spans residues G160–L174. Residues A175–D186 are Extracellular-facing. Residues L187–P206 traverse the membrane as a helical segment. Residues S207–Q224 lie on the Cytoplasmic side of the membrane. The helical transmembrane segment at I225–S245 threads the bilayer. The Extracellular segment spans residues G246–W327. N255 carries N-linked (GlcNAc...) asparagine glycosylation. Residues N328–L351 form a helical membrane-spanning segment. At S352–Q477 the chain is on the cytoplasmic side. Residues Q375–E392 form a binding to the beta subunit region. Residue D427 participates in Ca(2+) binding. The residue at position 428 (S428) is a Phosphoserine. 4 residues coordinate Ca(2+): S429, E431, C433, and S438. T441 is modified (phosphothreonine). One copy of the II repeat lies at E463 to L707. Residues V478 to V497 traverse the membrane as a helical segment. Topologically, residues H498–Y510 are extracellular. The chain crosses the membrane as a helical span at residues Y511 to G530. At M531–S539 the chain is on the cytoplasmic side. A helical transmembrane segment spans residues S540–W558. Residues A559–G568 lie on the Extracellular side of the membrane. Residues I569–W587 traverse the membrane as a helical segment. Residues A588 to S606 lie on the Cytoplasmic side of the membrane. The helical transmembrane segment at L607–F626 threads the bilayer. The Extracellular portion of the chain corresponds to G627 to W679. The chain crosses the membrane as a helical span at residues S680–V704. Residues D705 to H1150 are Cytoplasmic-facing. The tract at residues L730–S777 is disordered. Residues S737, S746, S794, S816, and S856 each carry the phosphoserine modification. 2 disordered regions span residues G854–G994 and S1091–G1127. The span at R914 to V927 shows a compositional bias: basic residues. Residues S934–E946 show a composition bias toward low complexity. S948 carries the phosphoserine modification. Basic and acidic residues-rich tracts occupy residues E956 to R985 and T1094 to E1105. At S1099 the chain carries Phosphoserine. One copy of the III repeat lies at N1143–F1429. The chain crosses the membrane as a helical span at residues Y1151–A1167. Residues A1168–Y1191 lie on the Extracellular side of the membrane. Residues F1192–Q1211 traverse the membrane as a helical segment. Residues G1212 to S1219 lie on the Cytoplasmic side of the membrane. The helical transmembrane segment at Y1220 to L1242 threads the bilayer. At A1243–T1256 the chain is on the extracellular side. A helical transmembrane segment spans residues I1257–R1274. The Cytoplasmic segment spans residues L1275–F1293. A helical transmembrane segment spans residues N1294 to L1313. Residues F1314 to M1400 lie on the Extracellular side of the membrane. The chain crosses the membrane as a helical span at residues E1401–L1424. At I1425–P1481 the chain is on the cytoplasmic side. One copy of the IV repeat lies at N1466–F1729. A helical transmembrane segment spans residues S1482 to M1500. Over K1501–Y1515 the chain is Extracellular. The chain crosses the membrane as a helical span at residues L1516 to F1535. Residues G1536–D1543 are Cytoplasmic-facing. A helical membrane pass occupies residues T1544–L1562. Topologically, residues T1563–F1573 are extracellular. N1569 carries an N-linked (GlcNAc...) asparagine glycan. The chain crosses the membrane as a helical span at residues N1574 to Q1592. Topologically, residues G1593–P1611 are cytoplasmic. Residues Y1612 to V1631 traverse the membrane as a helical segment. Residues F1632–D1700 are Extracellular-facing. N1692 carries an N-linked (GlcNAc...) asparagine glycan. The chain crosses the membrane as a helical span at residues L1701–M1726. Topologically, residues D1727–C2272 are cytoplasmic. One can recognise an EF-hand domain in the interval H1742–P1777. D1755, R1761, and E1766 together coordinate Ca(2+). Residues S2021–H2186 form a disordered region. Residues L2025–R2045 are compositionally biased toward basic and acidic residues. Phosphoserine is present on residues S2054 and S2073. Positions N2061–Q2078 are enriched in basic and acidic residues. A compositionally biased stretch (low complexity) spans S2097–P2112. Residues L2155–L2174 show a composition bias toward polar residues. The segment covering H2175–H2186 has biased composition (low complexity).

This sequence belongs to the calcium channel alpha-1 subunit (TC 1.A.1.11) family. CACNA1E subfamily. Interacts with EFHC1. Voltage-dependent calcium channels are multisubunit complexes, consisting of alpha-1, alpha-2, beta and delta subunits in a 1:1:1:1 ratio. The channel activity is directed by the pore-forming and voltage-sensitive alpha-1 subunit. In many cases, this subunit is sufficient to generate voltage-sensitive calcium channel activity. The auxiliary subunits beta and alpha-2/delta linked by a disulfide bridge regulate the channel activity. Expressed in neuronal tissues, retina, spleen, and pancreatic islet cells.

The protein localises to the membrane. The catalysed reaction is Ca(2+)(in) = Ca(2+)(out). In terms of biological role, voltage-sensitive calcium channels (VSCC) mediate the entry of calcium ions into excitable cells and are also involved in a variety of calcium-dependent processes, including muscle contraction, hormone or neurotransmitter release, gene expression, cell motility, cell division and cell death. The isoform alpha-1E gives rise to R-type calcium currents. R-type calcium channels belong to the 'high-voltage activated' (HVA) group and are blocked by nickel. They are however insensitive to dihydropyridines (DHP). Calcium channels containing alpha-1E subunit could be involved in the modulation of firing patterns of neurons which is important for information processing. This is Voltage-dependent R-type calcium channel subunit alpha-1E (Cacna1e) from Mus musculus (Mouse).